Here is an 896-residue protein sequence, read N- to C-terminus: Sodium/hydrogen exchanger 5 (896 aa).

Residues 1-45 (MLRAALSLLALPLAGAAEEPTQKPESPGEPPPGLELFRWQWHEVE) are Cytoplasmic-facing. A helical transmembrane segment spans residues 46–66 (APYLVALWILVASLAKIVFHL). Over 67 to 73 (SRKVTSL) the chain is Extracellular. Residues 74-94 (VPESCLLILLGLVLGGIVLAV) form a helical membrane-spanning segment. The Cytoplasmic segment spans residues 95 to 103 (AKKAEYQLE). A helical transmembrane segment spans residues 104–124 (PGTFFLFLLPPIVLDSGYFMP). At 125–134 (SRLFFDNLGA) the chain is on the extracellular side. Residues 135–155 (ILTYAVVGTLWNAFTTGAALW) traverse the membrane as a helical segment. The Cytoplasmic portion of the chain corresponds to 156 to 173 (GLQQAGLVAPRVQAGLLD). The helical transmembrane segment at 174-194 (FLLFGSLISAVDPVAVLAVFE) threads the bilayer. The Extracellular portion of the chain corresponds to 195–200 (EVHVNE). The N-linked (GlcNAc...) asparagine glycan is linked to asparagine 199. The helical transmembrane segment at 201-221 (TLFIIVFGESLLNDAVTVVLY) threads the bilayer. The Cytoplasmic segment spans residues 222 to 246 (KVCNSFVEMGSANVQATDYLKGVAS). Residues 247-267 (LFVVSLGGAAVGLVFAFLLAL) form a helical membrane-spanning segment. Over 268–276 (TTRFTKRVR) the chain is Extracellular. A helical membrane pass occupies residues 277–297 (IIEPLLVFLLAYAAYLTAEMA). At 298-331 (SLSAILAVTMCGLGCKKYVEANISHKSRTTVKYT) the chain is on the cytoplasmic side. Residues 332–352 (MKTLASCAETVIFMLLGISAV) form a helical membrane-spanning segment. Over 353-360 (DSSKWAWD) the chain is Extracellular. Residues 361 to 381 (SGLVLGTLIFILFFRALGVVL) traverse the membrane as a helical segment. Over 382-398 (QTWVLNQFRLVPLDKID) the chain is Cytoplasmic. A helical transmembrane segment spans residues 399–419 (QVVMSYGGLRGAVAFALVILL). Topologically, residues 420-428 (DRTKVPAKD) are extracellular. A helical membrane pass occupies residues 429–449 (YFVATTIVVVFFTVIVQGLTI). Residues 450-896 (KPLVKWLKVK…CIQFNRGSRL (447 aa)) are Cytoplasmic-facing. The interval 576 to 721 (GSGACLDLQV…SETEKEDDEG (146 aa)) is required for interaction with ARRB2. Disordered stretches follow at residues 658–686 (TKSKPRPRKTGRRKKDGVANAEATNGKHR), 701–720 (ESEEEEEESDSSETEKEDDE), and 818–864 (HPRG…QQQE). Over residues 660–672 (SKPRPRKTGRRKK) the composition is skewed to basic residues. Polar residues predominate over residues 854 to 864 (ESSADLPQQQE).

It belongs to the monovalent cation:proton antiporter 1 (CPA1) transporter (TC 2.A.36) family. In terms of assembly, interacts with CHP1 and CHP2. Interacts with ARRB2; facilitates the endocytosis of SLC9A5 from the plasma membrane. Interacts with RACK1; this interaction positively regulates SLC9A5 activity and promotes SLC9A5 localization to focal adhesions. Interacts with SCAMP2; this interaction regulates SLC9A5 cell-surface targeting and SLC9A5 activity. Post-translationally, phosphorylated by PRKAA2; promotes its accumulation at the cell surface. Phosphorylated by CSNK2A1 in a manner favoring its beta-arrestin binding and endocytosis. Mainly expressed in brain. Expressed in neurons of the central and peripheral nervous system. Expressed also in testis, spleen, and skeletal muscle.

It is found in the cell membrane. Its subcellular location is the recycling endosome membrane. The protein resides in the cell projection. It localises to the dendritic spine membrane. The protein localises to the synaptic cell membrane. It is found in the cell junction. Its subcellular location is the focal adhesion. It catalyses the reaction Na(+)(in) + H(+)(out) = Na(+)(out) + H(+)(in). ATP-depletion almost completely abolishes SLC9A5 activity. Inhibited by amiloride compounds. In terms of biological role, plasma membrane Na(+)/H(+) antiporter. Mediates the electroneutral exchange of intracellular H(+) ions for extracellular Na(+) in 1:1 stoichiometry, thus regulating intracellular pH homeostasis, in particular in neural tissues. Acts as a negative regulator of dendritic spine growth. Plays a role in postsynaptic remodeling and signaling. Can also contribute to organellar pH regulation, with consequences for receptor tyrosine kinase trafficking. This chain is Sodium/hydrogen exchanger 5, found in Homo sapiens (Human).